Here is a 76-residue protein sequence, read N- to C-terminus: Protein sigN132 (76 aa).

A compositionally biased stretch (polar residues) spans Met1 to Lys13. Positions Met1–Asn33 are disordered. Residues Ser14–Asn33 show a composition bias toward low complexity.

The chain is Protein sigN132 from Dictyostelium discoideum (Social amoeba).